The primary structure comprises 457 residues: Acetylcholine receptor subunit alpha (457 aa).

The signal sequence occupies residues 1 to 20 (MELSTVLLLLGLCSAGLVLG). At 21–230 (SEHETRLVAK…ITYHFVMQRL (210 aa)) the chain is on the extracellular side. Intrachain disulfides connect C148/C162 and C212/C213. An N-linked (GlcNAc...) asparagine glycan is attached at N161. 3 helical membrane-spanning segments follow: residues 231-255 (PLYF…VFYL), 263-281 (MTLS…LVIV), and 297-316 (YMLF…VIVI). Residues 317 to 428 (NTHHRSPSTH…WKYVAMVMDH (112 aa)) are Cytoplasmic-facing. Residues 429–447 (ILLGVFMLVCLIGTLAVFA) form a helical membrane-spanning segment.

It belongs to the ligand-gated ion channel (TC 1.A.9) family. Acetylcholine receptor (TC 1.A.9.1) subfamily. Alpha-1/CHRNA1 sub-subfamily. As to quaternary structure, one of the alpha chains that assemble within the acetylcholine receptor, a pentamer of two alpha chains, a beta, a delta, and a gamma (in immature muscle) or epsilon (in mature muscle) chains. The muscle heteropentamer composed of alpha-1, beta-1, delta, epsilon subunits interacts with the alpha-conotoxin ImII.

Its subcellular location is the postsynaptic cell membrane. The protein localises to the cell membrane. It carries out the reaction K(+)(in) = K(+)(out). It catalyses the reaction Na(+)(in) = Na(+)(out). In terms of biological role, upon acetylcholine binding, the AChR responds by an extensive change in conformation that affects all subunits and leads to opening of an ion-conducting channel across the plasma membrane. The sequence is that of Acetylcholine receptor subunit alpha (Chrna1) from Mus musculus (Mouse).